The sequence spans 305 residues: Orotidine 5'-phosphate decarboxylase (305 aa).

The Proton donor role is filled by Lys108.

Belongs to the OMP decarboxylase family. Type 2 subfamily.

The catalysed reaction is orotidine 5'-phosphate + H(+) = UMP + CO2. It functions in the pathway pyrimidine metabolism; UMP biosynthesis via de novo pathway; UMP from orotate: step 2/2. This Caldicellulosiruptor bescii (strain ATCC BAA-1888 / DSM 6725 / KCTC 15123 / Z-1320) (Anaerocellum thermophilum) protein is Orotidine 5'-phosphate decarboxylase.